Here is a 295-residue protein sequence, read N- to C-terminus: ATP synthase gamma chain (295 aa).

It belongs to the ATPase gamma chain family. As to quaternary structure, F-type ATPases have 2 components, CF(1) - the catalytic core - and CF(0) - the membrane proton channel. CF(1) has five subunits: alpha(3), beta(3), gamma(1), delta(1), epsilon(1). CF(0) has three main subunits: a, b and c.

Its subcellular location is the cell inner membrane. Its function is as follows. Produces ATP from ADP in the presence of a proton gradient across the membrane. The gamma chain is believed to be important in regulating ATPase activity and the flow of protons through the CF(0) complex. The chain is ATP synthase gamma chain from Chlorobium phaeobacteroides (strain BS1).